The sequence spans 307 residues: Putative ankyrin repeat protein L59 (307 aa).

ANK repeat units lie at residues 41–67 (LFNK…NLEK), 68–97 (IDNK…DTTN), 98–127 (HNYS…DIRA), 129–157 (DDEA…DVRN), 158–187 (RNDF…DIRT), 188–217 (DDDY…NIHA), 219–247 (GDSA…DIRI), 248–277 (DNDY…DIGA), and 279–307 (NNYA…LKLY).

The sequence is that of Putative ankyrin repeat protein L59 from Acanthamoeba polyphaga (Amoeba).